Consider the following 506-residue polypeptide: Glutamate--tRNA ligase (506 aa).

Positions 24-34 (PSPTGLQHIGG) match the 'HIGH' region motif. C121, C123, C148, and H150 together coordinate Zn(2+). The 'KMSKS' region signature appears at 266–270 (KLSKR). An ATP-binding site is contributed by K269.

The protein belongs to the class-I aminoacyl-tRNA synthetase family. Glutamate--tRNA ligase type 1 subfamily. Monomer. Requires Zn(2+) as cofactor.

It is found in the cytoplasm. The enzyme catalyses tRNA(Glu) + L-glutamate + ATP = L-glutamyl-tRNA(Glu) + AMP + diphosphate. Catalyzes the attachment of glutamate to tRNA(Glu) in a two-step reaction: glutamate is first activated by ATP to form Glu-AMP and then transferred to the acceptor end of tRNA(Glu). This chain is Glutamate--tRNA ligase, found in Borrelia recurrentis (strain A1).